Reading from the N-terminus, the 151-residue chain is Ribosome maturation factor RimP (151 aa).

It belongs to the RimP family.

It is found in the cytoplasm. Its function is as follows. Required for maturation of 30S ribosomal subunits. This chain is Ribosome maturation factor RimP, found in Caldicellulosiruptor saccharolyticus (strain ATCC 43494 / DSM 8903 / Tp8T 6331).